A 517-amino-acid chain; its full sequence is Crotonobetaine/carnitine--CoA ligase (517 aa).

This sequence belongs to the ATP-dependent AMP-binding enzyme family.

The catalysed reaction is 4-(trimethylamino)butanoate + ATP + CoA = 4-(trimethylamino)butanoyl-CoA + AMP + diphosphate. It catalyses the reaction crotonobetaine + ATP + CoA = crotonobetainyl-CoA + AMP + diphosphate. The enzyme catalyses (R)-carnitine + ATP + CoA = (R)-carnitinyl-CoA + AMP + diphosphate. The protein operates within amine and polyamine metabolism; carnitine metabolism. Its function is as follows. Catalyzes the transfer of CoA to carnitine, generating the initial carnitinyl-CoA needed for the CaiB reaction cycle. Also has activity toward crotonobetaine and gamma-butyrobetaine. The polypeptide is Crotonobetaine/carnitine--CoA ligase (Escherichia coli O139:H28 (strain E24377A / ETEC)).